The following is a 765-amino-acid chain: Protein transport protein sec23-2 (765 aa).

Residues Cys-56, Cys-60, Cys-79, and Cys-82 each contribute to the Zn(2+) site. Residues Ser-565 and Ser-566 each carry the phosphoserine modification.

This sequence belongs to the SEC23/SEC24 family. SEC23 subfamily. As to quaternary structure, the COPII coat is composed of at least 5 proteins: the sec23/24 complex, the sec13/31 complex, and the protein sar1.

The protein localises to the cytoplasm. It is found in the cytoplasmic vesicle. It localises to the COPII-coated vesicle membrane. Its subcellular location is the endoplasmic reticulum membrane. The protein resides in the golgi apparatus membrane. In terms of biological role, component of the coat protein complex II (COPII) which promotes the formation of transport vesicles from the endoplasmic reticulum (ER). The coat has two main functions, the physical deformation of the endoplasmic reticulum membrane into vesicles and the selection of cargo molecules. The protein is Protein transport protein sec23-2 (sec232) of Schizosaccharomyces pombe (strain 972 / ATCC 24843) (Fission yeast).